The primary structure comprises 255 residues: Flap endonuclease Xni (255 aa).

Aspartate 105 provides a ligand contact to Mg(2+). The region spanning glutamate 162–proline 253 is the 5'-3' exonuclease domain. K(+) is bound by residues leucine 172, alanine 173, proline 181, valine 183, and isoleucine 186. Residues glycine 185 to serine 190 form an interaction with DNA region.

The protein belongs to the Xni family. Mg(2+) serves as cofactor. Requires K(+) as cofactor.

Has flap endonuclease activity. During DNA replication, flap endonucleases cleave the 5'-overhanging flap structure that is generated by displacement synthesis when DNA polymerase encounters the 5'-end of a downstream Okazaki fragment. This chain is Flap endonuclease Xni, found in Shewanella sediminis (strain HAW-EB3).